The primary structure comprises 173 residues: FMCDEMERSVHDALCVVKRVLESKSVVPGGGAVEAALSIYLENYATSMGSREQLAIAEFARSLLVIPKTLAVNRAQDSTDLVAKLRAFHNEAQVNPDRKNLKWIGLDLVNGKARDNKQAGVFEPTMVKTKSLKFATEAAITILRIDDLIKLYPESNDKGQSYQDAVRSGSLEN.

Belongs to the TCP-1 chaperonin family. As to quaternary structure, component of the chaperonin-containing T-complex (TRiC), a heterooligomeric complex of about 850 to 900 kDa that forms two stacked rings, 12 to 16 nm in diameter.

It is found in the cytoplasm. Its subcellular location is the cytosol. Its function is as follows. Component of the chaperonin-containing T-complex (TRiC), a molecular chaperone complex that assists the folding of proteins upon ATP hydrolysis. In Ambystoma mexicanum (Axolotl), this protein is T-complex protein 1 subunit alpha.